The chain runs to 111 residues: Transcription initiation factor IIA subunit 2 (111 aa).

It belongs to the TFIIA subunit 2 family. TFIIA is a heterodimer of the large unprocessed subunit 1 and a small subunit gamma. It was originally believed to be a heterotrimer of an alpha, a beta and a gamma subunit. Interacts with NCOA6 general coactivator. TFIIA forms a complex with TBP.

The protein resides in the nucleus. Functionally, TFIIA is a component of the transcription machinery of RNA polymerase II and plays an important role in transcriptional activation. TFIIA in a complex with TBP mediates transcriptional activity. This Paralichthys olivaceus (Bastard halibut) protein is Transcription initiation factor IIA subunit 2 (gtf2a2).